Consider the following 513-residue polypeptide: ATP synthase subunit alpha (513 aa).

169 to 176 (GDRQTGKS) contacts ATP.

The protein belongs to the ATPase alpha/beta chains family. As to quaternary structure, F-type ATPases have 2 components, CF(1) - the catalytic core - and CF(0) - the membrane proton channel. CF(1) has five subunits: alpha(3), beta(3), gamma(1), delta(1), epsilon(1). CF(0) has three main subunits: a(1), b(2) and c(9-12). The alpha and beta chains form an alternating ring which encloses part of the gamma chain. CF(1) is attached to CF(0) by a central stalk formed by the gamma and epsilon chains, while a peripheral stalk is formed by the delta and b chains.

Its subcellular location is the cell inner membrane. The enzyme catalyses ATP + H2O + 4 H(+)(in) = ADP + phosphate + 5 H(+)(out). Its function is as follows. Produces ATP from ADP in the presence of a proton gradient across the membrane. The alpha chain is a regulatory subunit. This chain is ATP synthase subunit alpha, found in Sodalis glossinidius (strain morsitans).